A 634-amino-acid chain; its full sequence is Protection of telomeres protein 1 (634 aa).

DNA-binding regions lie at residues 33 to 48 (KPPYLSKGTDYCSVVT) and 270 to 273 (SYGR).

The protein belongs to the telombin family. In terms of assembly, homodimer or homooligomer. Component of the shelterin complex (telosome) composed of TERF1, TERF2, TINF2, TERF2IP, ACD and POT1. Binds single-stranded telomeric DNA as a monomer. Associated component of the telomerase holoenzyme complex. Found in a complex with TERF1, TINF2 and TNKS1. Interacts with TNKS1. Forms heterodimers with ACD. Identified in a complex with ACD and single-stranded telomeric DNA. In terms of tissue distribution, ubiquitous.

Its subcellular location is the nucleus. The protein resides in the chromosome. The protein localises to the telomere. In terms of biological role, component of the telomerase ribonucleoprotein (RNP) complex that is essential for the replication of chromosome termini. Is a component of the double-stranded telomeric DNA-binding TRF1 complex which is involved in the regulation of telomere length by cis-inhibition of telomerase. Also acts as a single-stranded telomeric DNA-binding protein and thus may act as a downstream effector of the TRF1 complex and may transduce information about telomere maintenance and/or length to the telomere terminus. Component of the shelterin complex (telosome) that is involved in the regulation of telomere length and protection. Shelterin associates with arrays of double-stranded TTAGGG repeats added by telomerase and protects chromosome ends; without its protective activity, telomeres are no longer hidden from the DNA damage surveillance and chromosome ends are inappropriately processed by DNA repair pathways. Binds to two or more telomeric single-stranded 5'-TTAGGG-3' repeats (G-strand) and with high specificity to a minimal telomeric single-stranded 5'-TAGGGTTAG-3' sequence. Binds telomeric single-stranded sequences internally or at proximity of a 3'-end. Its activity is TERT dependent but it does not increase TERT activity by itself. In contrast, the ACD-POT1 heterodimer enhances telomere elongation by increasing telomerase processivity. This chain is Protection of telomeres protein 1 (POT1), found in Homo sapiens (Human).